A 359-amino-acid polypeptide reads, in one-letter code: GTP cyclohydrolase FolE2 (359 aa).

Belongs to the GTP cyclohydrolase IV family.

It carries out the reaction GTP + H2O = 7,8-dihydroneopterin 3'-triphosphate + formate + H(+). The protein operates within cofactor biosynthesis; 7,8-dihydroneopterin triphosphate biosynthesis; 7,8-dihydroneopterin triphosphate from GTP: step 1/1. Its function is as follows. Converts GTP to 7,8-dihydroneopterin triphosphate. The protein is GTP cyclohydrolase FolE2 of Cereibacter sphaeroides (strain ATCC 17025 / ATH 2.4.3) (Rhodobacter sphaeroides).